The primary structure comprises 162 residues: Lipoprotein signal peptidase (162 aa).

4 helical membrane-spanning segments follow: residues 12–32 (WFALAALVIVLDQISKLYFNS), 42–62 (VVEGFFNFTLVYNPGAAFSFL), 66–86 (GGWQKYLFTILAFAVSGWLGW), and 93–113 (FSGLMNLAAAFIMGGALGNVI). Catalysis depends on residues Asp123 and Asp142. The chain crosses the membrane as a helical span at residues 133-153 (WYYPAFNLADSFICVGAALMV).

This sequence belongs to the peptidase A8 family.

It is found in the cell inner membrane. The enzyme catalyses Release of signal peptides from bacterial membrane prolipoproteins. Hydrolyzes -Xaa-Yaa-Zaa-|-(S,diacylglyceryl)Cys-, in which Xaa is hydrophobic (preferably Leu), and Yaa (Ala or Ser) and Zaa (Gly or Ala) have small, neutral side chains.. It functions in the pathway protein modification; lipoprotein biosynthesis (signal peptide cleavage). This protein specifically catalyzes the removal of signal peptides from prolipoproteins. The protein is Lipoprotein signal peptidase of Chromobacterium violaceum (strain ATCC 12472 / DSM 30191 / JCM 1249 / CCUG 213 / NBRC 12614 / NCIMB 9131 / NCTC 9757 / MK).